We begin with the raw amino-acid sequence, 586 residues long: Membrane protein insertase YidC (586 aa).

5 consecutive transmembrane segments (helical) span residues 5–25 (TLIG…LMAP), 371–391 (GVII…LTMA), 436–456 (LGGC…FYVF), 486–506 (IPLY…AVFF), and 522–542 (FMMY…PSGL).

This sequence belongs to the OXA1/ALB3/YidC family. Type 1 subfamily. Interacts with the Sec translocase complex via SecD. Specifically interacts with transmembrane segments of nascent integral membrane proteins during membrane integration.

The protein localises to the cell inner membrane. Required for the insertion and/or proper folding and/or complex formation of integral membrane proteins into the membrane. Involved in integration of membrane proteins that insert both dependently and independently of the Sec translocase complex, as well as at least some lipoproteins. Aids folding of multispanning membrane proteins. This is Membrane protein insertase YidC from Chloroherpeton thalassium (strain ATCC 35110 / GB-78).